We begin with the raw amino-acid sequence, 346 residues long: Histidinol-phosphate aminotransferase (346 aa).

Residue Lys-209 is modified to N6-(pyridoxal phosphate)lysine.

It belongs to the class-II pyridoxal-phosphate-dependent aminotransferase family. Histidinol-phosphate aminotransferase subfamily. In terms of assembly, homodimer. Requires pyridoxal 5'-phosphate as cofactor.

The catalysed reaction is L-histidinol phosphate + 2-oxoglutarate = 3-(imidazol-4-yl)-2-oxopropyl phosphate + L-glutamate. Its pathway is amino-acid biosynthesis; L-histidine biosynthesis; L-histidine from 5-phospho-alpha-D-ribose 1-diphosphate: step 7/9. The protein is Histidinol-phosphate aminotransferase of Aliivibrio fischeri (strain MJ11) (Vibrio fischeri).